Reading from the N-terminus, the 57-residue chain is Large ribosomal subunit protein bL32c (57 aa).

The tract at residues Met1–Lys21 is disordered.

It belongs to the bacterial ribosomal protein bL32 family.

The protein localises to the plastid. The protein resides in the chloroplast. The polypeptide is Large ribosomal subunit protein bL32c (Stigeoclonium helveticum (Green alga)).